The following is a 1345-amino-acid chain: Membrane-anchored lipid-binding protein LAM4 (1345 aa).

Residues 1–1197 (MTRDSKKKHH…NFSSEIFMNK (1197 aa)) lie on the Cytoplasmic side of the membrane. Disordered stretches follow at residues 51-80 (RVGGNPDIPSLLKPETFTESPAKGSQKAAA), 115-134 (SLKGRFQDGNSNSNSVPSLS), 139-164 (EKEKLQSGKREGSSNQAEEKTPDGHD), 190-302 (DADN…SLDD), 356-397 (LPEA…KPRR), 425-447 (SFNSSNGLTNNDPEYEDREPREM), and 489-531 (STII…NGRQ). Threonine 66 is subject to Phosphothreonine. Residues 216 to 228 (SENSTNNKNTSST) are compositionally biased toward low complexity. Over residues 246 to 271 (SKSSTPSNQQLNTTEAGSKSKPSSLS) the composition is skewed to polar residues. Low complexity predominate over residues 283–294 (HSNSHSSSNAIS). Residues 425 to 436 (SFNSSNGLTNND) are compositionally biased toward polar residues. A compositionally biased stretch (low complexity) spans 498–516 (SNGRPSSGLRRSSSKSFSS). The GRAM domain maps to 549-616 (EFHAIFKDSG…FKTIVQIEKR (68 aa)). Over residues 665 to 677 (SNSNNTNSSSNSI) the composition is skewed to low complexity. Positions 665–722 (SNSNNTNSSSNSISDDENDDYDDDYDDYGDDDDDLYDNSNNISDSTDMTSSVSIGKPE) are disordered. Over residues 678–700 (SDDENDDYDDDYDDYGDDDDDLY) the composition is skewed to acidic residues. Serine 747 carries the post-translational modification Phosphoserine. 2 consecutive VASt domains span residues 758–930 (NEKL…TRSA) and 967–1139 (DDSI…SRAK). Positions 930–963 (ATKRKRSSKENTVTVSTLPKMEPSSHAPTEPDIQ) are disordered. The segment covering 1141–1158 (KKPVKKVMKSHDKHRPFH) has biased composition (basic residues). The disordered stretch occupies residues 1141-1172 (KKPVKKVMKSHDKHRPFHSKVEQKSSESRKSD). Basic and acidic residues predominate over residues 1159–1172 (SKVEQKSSESRKSD). The chain crosses the membrane as a helical span at residues 1198–1218 (LLSPQKLFLILGLTIMLFWSP). Residues 1219-1345 (RLHVFQEKNN…NIERDANDLS (127 aa)) are Lumenal-facing.

This sequence belongs to the YSP2 family.

It localises to the endoplasmic reticulum membrane. Functionally, may be involved in sterol transfer between intracellular membranes. The sequence is that of Membrane-anchored lipid-binding protein LAM4 from Saccharomyces cerevisiae (strain ATCC 204508 / S288c) (Baker's yeast).